A 352-amino-acid polypeptide reads, in one-letter code: CRISPR-associated endonuclease Cas1 1 (352 aa).

Mn(2+) contacts are provided by glutamate 207, histidine 274, and glutamate 289.

The protein belongs to the CRISPR-associated endonuclease Cas1 family. As to quaternary structure, homodimer, forms a heterotetramer with a Cas2 homodimer. Mg(2+) serves as cofactor. The cofactor is Mn(2+).

In terms of biological role, CRISPR (clustered regularly interspaced short palindromic repeat), is an adaptive immune system that provides protection against mobile genetic elements (viruses, transposable elements and conjugative plasmids). CRISPR clusters contain spacers, sequences complementary to antecedent mobile elements, and target invading nucleic acids. CRISPR clusters are transcribed and processed into CRISPR RNA (crRNA). Acts as a dsDNA endonuclease. Involved in the integration of spacer DNA into the CRISPR cassette. This chain is CRISPR-associated endonuclease Cas1 1, found in Saccharolobus solfataricus (strain ATCC 35092 / DSM 1617 / JCM 11322 / P2) (Sulfolobus solfataricus).